The chain runs to 20 residues: Luminal-binding protein (20 aa).

This sequence belongs to the heat shock protein 70 family.

The protein resides in the endoplasmic reticulum lumen. Probably plays a role in facilitating the assembly of multimeric protein complexes inside the ER. This chain is Luminal-binding protein, found in Phaseolus vulgaris (Kidney bean).